The chain runs to 401 residues: Homoserine O-acetyltransferase (401 aa).

One can recognise an AB hydrolase-1 domain in the interval 37 to 358 (NAVLVCHALT…HGHDAFLVEP (322 aa)). Residue S146 is the Nucleophile of the active site. R215 contributes to the substrate binding site. Catalysis depends on residues D318 and H351. Position 352 (D352) interacts with substrate.

The protein belongs to the AB hydrolase superfamily. MetX family. Homodimer.

It localises to the cytoplasm. The catalysed reaction is L-homoserine + acetyl-CoA = O-acetyl-L-homoserine + CoA. The protein operates within amino-acid biosynthesis; L-methionine biosynthesis via de novo pathway; O-acetyl-L-homoserine from L-homoserine: step 1/1. Functionally, transfers an acetyl group from acetyl-CoA to L-homoserine, forming acetyl-L-homoserine. In Natronomonas pharaonis (strain ATCC 35678 / DSM 2160 / CIP 103997 / JCM 8858 / NBRC 14720 / NCIMB 2260 / Gabara) (Halobacterium pharaonis), this protein is Homoserine O-acetyltransferase.